Here is a 201-residue protein sequence, read N- to C-terminus: UPF0301 protein Atu0781 (201 aa).

The protein belongs to the UPF0301 (AlgH) family.

This is UPF0301 protein Atu0781 from Agrobacterium fabrum (strain C58 / ATCC 33970) (Agrobacterium tumefaciens (strain C58)).